A 106-amino-acid polypeptide reads, in one-letter code: uncharacterized protein (106 aa).

This is an uncharacterized protein from Rickettsia prowazekii (strain Madrid E).